The chain runs to 875 residues: MGKTANSPGSGARPDPVRSFNRWKKKHSHRQNKKKQLRKQLKKPEWQVERESISRLMQNYEKINVNEITRFSDFPLSKKTLKGLQEAQYRLVTEIQKQTIGLALQGKDVLGAAKTGSGKTLAFLVPVLEALYRLQWTSTDGLGVLIISPTRELAYQTFEVLRKVGKNHDFSAGLIIGGKDLKHEAERINNINILVCTPGRLLQHMDETVSFHATDLQMLVLDEADRILDMGFADTMNAVIENLPKKRQTLLFSATQTKSVKDLARLSLKNPEYVWVHEKAKYSTPATLEQNYIVCELQQKISVLYSFLRSHLKKKSIVFFSSCKEVQYLYRVFCRLRPGVSILALHGRQQQMRRMEVYNEFVRKRAAVLFATDIAARGLDFPAVNWVLQFDCPEDANTYIHRAGRTARYKEDGEALLILLPSEKAMVQQLLQKKVPVKEIKINPEKLIDVQKKLESILAQDQDLKERAQRCFVSYVRSVYLMKDKEVFDVSKLPIPEYALSLGLAVAPRVRFLQKMQKQPTKELVRSQADKVIEPRAPSLTNDEVEEFRAYFNEKMSILQKGGKRLEGTEHRQDNDTGNEEQEEEEDDEEEMEEKLAKAKGSQAPSLPNTSEAQKIKEVPTQFLDRDEEEEDADFLKVKRHNVFGLDLKDEKTLQKKEPSKSSIKKKMTKVAEAKKVMKRNFKVNKKITFTDEGELVQQWPQMQKSAIKDAEEDDDTGGINLHKAKERLQEEDKFDKEEYRKKIKAKHREKRLKEREARREANKRQAKAKDEEEAFLDWSDDDDDDDDGFDPSTLPDPDKYRSSEDSDSEDMENKISDTKKKQGMKKRSNSEVEDVGPTSHNRKKARWDTLEPLDTGLSLAEDEELVLHLLRSQS.

The disordered stretch occupies residues methionine 1 to lysine 43. Phosphothreonine is present on threonine 4. A Phosphoserine modification is found at serine 7. Residues asparagine 21–leucine 41 show a composition bias toward basic residues. The Q motif signature appears at threonine 69–lysine 97. Residues tyrosine 89–leucine 91, glutamine 96, and alanine 113–threonine 120 contribute to the ATP site. One can recognise a Helicase ATP-binding domain in the interval isoleucine 100–valine 274. The DEAD box motif lies at aspartate 222 to aspartate 225. One can recognise a Helicase C-terminal domain in the interval threonine 287 to isoleucine 448. Serine 539 carries the phosphoserine modification. The residue at position 555 (lysine 555) is an N6-acetyllysine. A disordered region spans residues glycine 562 to glutamate 631. Basic and acidic residues predominate over residues lysine 564–asparagine 575. At threonine 577 the chain carries Phosphothreonine. Residues threonine 577–glutamate 593 show a composition bias toward acidic residues. The segment covering glutamine 603–alanine 613 has biased composition (polar residues). Lysine 649 participates in a covalent cross-link: Glycyl lysine isopeptide (Lys-Gly) (interchain with G-Cter in SUMO2). Residues methionine 703–threonine 850 are disordered. Over residues glutamate 727–arginine 741 the composition is skewed to basic and acidic residues. Residues lysine 742–lysine 751 are compositionally biased toward basic residues. A compositionally biased stretch (basic and acidic residues) spans arginine 752 to aspartate 771. Over residues glutamate 772–phenylalanine 790 the composition is skewed to acidic residues. Serine 780 bears the Phosphoserine mark. Residues methionine 812–lysine 821 are compositionally biased toward basic and acidic residues. Position 831 is a phosphoserine (serine 831).

This sequence belongs to the DEAD box helicase family. DDX10/DBP4 subfamily. As to quaternary structure, interacts with AIM2; this interaction promotes AIM2 stability. Interacts with SCNA; this interaction causes DDX10 mislocalization to the nucleoplasm and cytoplasmic inclusions. In terms of tissue distribution, high in testis but widely expressed.

Its subcellular location is the cytoplasm. It is found in the nucleus. It localises to the nucleolus. The enzyme catalyses ATP + H2O = ADP + phosphate + H(+). Functionally, putative ATP-dependent RNA helicase that plays various role in innate immunity or inflammation. Plays a role in the enhancement of AIM2-induced inflammasome activation by interacting with AIM2 and stabilizing its protein level. Negatively regulates viral infection by promoting interferon beta production and interferon stimulated genes/ISGs expression. The polypeptide is Probable ATP-dependent RNA helicase DDX10 (DDX10) (Homo sapiens (Human)).